The chain runs to 216 residues: Putative holocytochrome-c1 synthase (216 aa).

The interval 1–46 (MQPEQLNQEEESKCPVPPEVRDAWLKSHGGKKPSEVHDTPHPTMLP) is disordered.

It belongs to the cytochrome c-type heme lyase family.

The protein localises to the mitochondrion inner membrane. The enzyme catalyses holo-[cytochrome c] = apo-[cytochrome c] + heme b. Lyase that catalyzes the covalent linking of the heme group to the cytochrome C1 apoprotein to produce the mature functional cytochrome. This is Putative holocytochrome-c1 synthase from Schizosaccharomyces pombe (strain 972 / ATCC 24843) (Fission yeast).